A 182-amino-acid chain; its full sequence is RFKKIRRLGALPGLTSKRPRSGSDLKNPLRSGKRSQYRIRLEEKQKLRFHYGLTERQLLRYVHIARKAKGSTGQVLLQLLEMRLDNILFRLGMASTIPGARQLVNHRHILVNGRIVDIPSYRCKPRDIITTKDKQRSKALIQNFIASAPREELPNHLTIDSFQYKGLVNQIIDSKWIGLKIN.

Residues 13-32 (GLTSKRPRSGSDLKNPLRSG) form a disordered region. The S4 RNA-binding domain occupies 82–143 (MRLDNILFRL…KQRSKALIQN (62 aa)).

This sequence belongs to the universal ribosomal protein uS4 family. In terms of assembly, part of the 30S ribosomal subunit. Contacts protein S5. The interaction surface between S4 and S5 is involved in control of translational fidelity.

Its subcellular location is the plastid. The protein resides in the chloroplast. Its function is as follows. One of the primary rRNA binding proteins, it binds directly to 16S rRNA where it nucleates assembly of the body of the 30S subunit. With S5 and S12 plays an important role in translational accuracy. The protein is Small ribosomal subunit protein uS4c (rps4) of Scadoxus puniceus (Paintbrush lily).